A 139-amino-acid chain; its full sequence is Nucleoside diphosphate kinase (139 aa).

ATP-binding residues include K11, F59, R87, T93, R104, and N114. Residue H117 is the Pros-phosphohistidine intermediate of the active site.

It belongs to the NDK family. Homotetramer. Requires Mg(2+) as cofactor.

Its subcellular location is the cytoplasm. It catalyses the reaction a 2'-deoxyribonucleoside 5'-diphosphate + ATP = a 2'-deoxyribonucleoside 5'-triphosphate + ADP. The catalysed reaction is a ribonucleoside 5'-diphosphate + ATP = a ribonucleoside 5'-triphosphate + ADP. Its function is as follows. Major role in the synthesis of nucleoside triphosphates other than ATP. The ATP gamma phosphate is transferred to the NDP beta phosphate via a ping-pong mechanism, using a phosphorylated active-site intermediate. The sequence is that of Nucleoside diphosphate kinase from Coxiella burnetii (strain CbuK_Q154) (Coxiella burnetii (strain Q154)).